The chain runs to 280 residues: Bis(5'-nucleosyl)-tetraphosphatase, symmetrical (280 aa).

This sequence belongs to the Ap4A hydrolase family.

It carries out the reaction P(1),P(4)-bis(5'-adenosyl) tetraphosphate + H2O = 2 ADP + 2 H(+). In terms of biological role, hydrolyzes diadenosine 5',5'''-P1,P4-tetraphosphate to yield ADP. In Shigella flexneri serotype 5b (strain 8401), this protein is Bis(5'-nucleosyl)-tetraphosphatase, symmetrical.